The sequence spans 105 residues: Met repressor (105 aa).

It belongs to the MetJ family. In terms of assembly, homodimer.

The protein localises to the cytoplasm. This regulatory protein, when combined with SAM (S-adenosylmethionine) represses the expression of the methionine regulon and of enzymes involved in SAM synthesis. This Yersinia pestis bv. Antiqua (strain Antiqua) protein is Met repressor.